A 273-amino-acid polypeptide reads, in one-letter code: Karrikin insensitive 2 receptor B (273 aa).

The active-site Nucleophile is S95. The active site involves D217.

It belongs to the AB hydrolase superfamily. In terms of tissue distribution, expressed in stigma.

It localises to the nucleus. Its subcellular location is the cytoplasm. In terms of biological role, may be involved in plant olfaction during volatile communication. The chain is Karrikin insensitive 2 receptor B from Petunia hybrida (Petunia).